Here is a 950-residue protein sequence, read N- to C-terminus: Nonsense-mediated mRNA decay factor SMG8 (950 aa).

Disordered regions lie at residues 560–607 (HTGK…LSPT) and 624–651 (NESQ…ADTE). Residues 568–582 (QDEDGEEDAEDEEGQ) are compositionally biased toward acidic residues. The segment covering 593-607 (QNTASNGCSQPLSPT) has biased composition (polar residues). The segment covering 624-648 (NESQASSEQLSNSEQNSTSSGTSSA) has biased composition (low complexity).

Belongs to the SMG8 family.

Functionally, involved in nonsense-mediated decay (NMD) of mRNAs containing premature stop codons. Probable component of kinase complex containing nonC and recruited to stalled ribosomes. The sequence is that of Nonsense-mediated mRNA decay factor SMG8 from Drosophila yakuba (Fruit fly).